The following is a 189-amino-acid chain: Glucose-6-phosphate isomerase (189 aa).

Residues His88, His90, Glu97, and His136 each contribute to the Fe cation site.

The protein belongs to the archaeal-type GPI family. Homodimer.

Its subcellular location is the cytoplasm. The enzyme catalyses alpha-D-glucose 6-phosphate = beta-D-fructose 6-phosphate. It functions in the pathway carbohydrate degradation; glycolysis; D-glyceraldehyde 3-phosphate and glycerone phosphate from D-glucose: step 2/4. This Thermococcus kodakarensis (strain ATCC BAA-918 / JCM 12380 / KOD1) (Pyrococcus kodakaraensis (strain KOD1)) protein is Glucose-6-phosphate isomerase.